The sequence spans 256 residues: Glutamate racemase (256 aa).

Residues 12-13 (DS) and 44-45 (YG) each bind substrate. C75 serves as the catalytic Proton donor/acceptor. Residue 76–77 (NT) participates in substrate binding. C186 (proton donor/acceptor) is an active-site residue. A substrate-binding site is contributed by 187-188 (TH).

This sequence belongs to the aspartate/glutamate racemases family.

It catalyses the reaction L-glutamate = D-glutamate. It functions in the pathway cell wall biogenesis; peptidoglycan biosynthesis. In terms of biological role, provides the (R)-glutamate required for cell wall biosynthesis. This is Glutamate racemase from Clostridium acetobutylicum (strain ATCC 824 / DSM 792 / JCM 1419 / IAM 19013 / LMG 5710 / NBRC 13948 / NRRL B-527 / VKM B-1787 / 2291 / W).